Reading from the N-terminus, the 452-residue chain is Probable phosphoglucosamine mutase (452 aa).

The active-site Phosphoserine intermediate is Ser96. 4 residues coordinate Mg(2+): Ser96, Asp235, Asp237, and Asp239. Ser96 carries the phosphoserine modification.

It belongs to the phosphohexose mutase family. It depends on Mg(2+) as a cofactor. Activated by phosphorylation.

The enzyme catalyses alpha-D-glucosamine 1-phosphate = D-glucosamine 6-phosphate. Its function is as follows. Catalyzes the conversion of glucosamine-6-phosphate to glucosamine-1-phosphate. The polypeptide is Probable phosphoglucosamine mutase (Methanopyrus kandleri (strain AV19 / DSM 6324 / JCM 9639 / NBRC 100938)).